The primary structure comprises 263 residues: Triosephosphate isomerase (263 aa).

10-12 provides a ligand contact to substrate; it reads NWK. H104 (electrophile) is an active-site residue. The active-site Proton acceptor is E176. Residues G182, S221, and 242–243 each bind substrate; that span reads GG.

The protein belongs to the triosephosphate isomerase family. As to quaternary structure, homodimer.

Its subcellular location is the cytoplasm. It carries out the reaction D-glyceraldehyde 3-phosphate = dihydroxyacetone phosphate. It participates in carbohydrate biosynthesis; gluconeogenesis. It functions in the pathway carbohydrate degradation; glycolysis; D-glyceraldehyde 3-phosphate from glycerone phosphate: step 1/1. Involved in the gluconeogenesis. Catalyzes stereospecifically the conversion of dihydroxyacetone phosphate (DHAP) to D-glyceraldehyde-3-phosphate (G3P). This is Triosephosphate isomerase from Haemophilus influenzae (strain ATCC 51907 / DSM 11121 / KW20 / Rd).